We begin with the raw amino-acid sequence, 345 residues long: Probable deoxyhypusine synthase 2 (345 aa).

K292 functions as the Nucleophile in the catalytic mechanism.

This sequence belongs to the deoxyhypusine synthase family. Requires NAD(+) as cofactor.

The enzyme catalyses [eIF5A protein]-L-lysine + spermidine = [eIF5A protein]-deoxyhypusine + propane-1,3-diamine. It functions in the pathway protein modification; eIF5A hypusination. Functionally, catalyzes the NAD-dependent oxidative cleavage of spermidine and the subsequent transfer of the butylamine moiety of spermidine to the epsilon-amino group of a specific lysine residue of the eIF-5A precursor protein to form the intermediate deoxyhypusine residue. The polypeptide is Probable deoxyhypusine synthase 2 (dys2) (Methanosarcina mazei (strain ATCC BAA-159 / DSM 3647 / Goe1 / Go1 / JCM 11833 / OCM 88) (Methanosarcina frisia)).